Here is a 101-residue protein sequence, read N- to C-terminus: uncharacterized protein (101 aa).

This is an uncharacterized protein from Sulfolobus islandicus filamentous virus (isolate Iceland/Hveragerdi) (SIFV).